Consider the following 343-residue polypeptide: 2-alkenal reductase (NADP(+)-dependent) (343 aa).

Substrate-binding residues include Tyr55 and Tyr80. NADP(+)-binding positions include 165–166 (AV), Gly186, Lys190, Tyr206, Asn230, Cys252, Tyr258, 282–284 (FLV), and Asn332.

The protein belongs to the NADP-dependent oxidoreductase L4BD family. As to quaternary structure, homodimer.

The catalysed reaction is an n-alkanal + NADP(+) = an alk-2-enal + NADPH + H(+). Reduces the C=C double bonds of alpha, beta unsaturated enones, but has no activity on enones with an endocyclic C=C double-bond. Shows a high specificity for NADPH as the hybrid donor. Substrates are 1-nitrocyclohexene, 2-methylpentenal, trans-cinnamaldehyde, methyl-trans-2-methylcinnamaldehyde, trans-2-nonenal and 1-octen-3-one. Reduced activity with aplha-methyl transcinnamaldehyde, 1-cyclohexene-1-carboxaldehyde, methyl crotonate, (R)-pulegone, and dimethyl itaconate and no activity with maleimides, citral, (5R)- or (5S)-carvone, (S)-perillyl alcohol, and substituted cyclohexenones and cyclopentenones. May also act as a allyl-alcohol dehydrogenase by catalyzing the dehydrogenation of secondary allylic alcohols rather than saturated secondary alcohols. Allyl-alcohol dehydrogenase is specific for the S-stereoisomer of the alcohols. This Nicotiana tabacum (Common tobacco) protein is 2-alkenal reductase (NADP(+)-dependent) (DBR).